Consider the following 491-residue polypeptide: Large ribosomal subunit protein mL101 (rPPR4) (491 aa).

PPR repeat units follow at residues 122–156 (TELT…NITP), 157–191 (SSMS…NVMP), 192–226 (DSYT…GRVA), 228–262 (DWTT…NTQR), 263–293 (DFTA…LRLA), 298–328 (SNVA…WQAN), 333–367 (DIRI…GGKL), and 368–402 (NAKT…GKGD).

It belongs to the PPR family. P subfamily. Component of the mitochondrial ribosome large subunit.

The protein resides in the mitochondrion. The sequence is that of Large ribosomal subunit protein mL101 (rPPR4) from Arabidopsis thaliana (Mouse-ear cress).